The following is a 218-amino-acid chain: Thiopurine S-methyltransferase (218 aa).

S-adenosyl-L-methionine is bound by residues tryptophan 10, leucine 45, glutamate 66, and arginine 123.

The protein belongs to the class I-like SAM-binding methyltransferase superfamily. TPMT family.

It localises to the cytoplasm. It carries out the reaction S-adenosyl-L-methionine + a thiopurine = S-adenosyl-L-homocysteine + a thiopurine S-methylether.. In Azotobacter vinelandii (strain DJ / ATCC BAA-1303), this protein is Thiopurine S-methyltransferase.